The sequence spans 213 residues: Andrastin A biosynthesis cluster protein B (213 aa).

In terms of biological role, part of the gene cluster that mediates the biosynthesis of andrastins, meroterpenoid compounds that exhibit inhibitory activity against ras farnesyltransferase, suggesting that they could be promising leads for antitumor agents. The first step of the pathway is the synthesis of 3,5-dimethylorsellinic acid (DMOA) by the polyketide synthase adrD via condensation of one acetyl-CoA starter unit with 3 malonyl-CoA units and 2 methylations. DMAO is then converted to farnesyl-DMAO by the prenyltransferase adrG. The methyltransferase adrK catalyzes the methylation of the carboxyl group of farnesyl-DMAO to farnesyl-DMAO methyl ester which is further converted to epoxyfarnesyl-DMAO methyl ester by the FAD-dependent monooxygenase adrH. The terpene cyclase adrI then catalyzes the carbon skeletal rearrangement to generate the andrastin E, the first compound in the pathway having the andrastin scaffold, with the tetracyclic ring system. The post-cyclization tailoring enzymes adrF, adrE, adrJ, and adrA, are involved in the conversion of andrastin E into andrastin A. The short chain dehydrogenase adrF is responsible for the oxidation of the C-3 a hydroxyl group of andrastin E to yield the corresponding ketone, andrastin D. The ketoreductase adrE stereoselectively reduces the carbonyl moiety to reverse the stereochemistry of the C-3 position to yield andrastin F. The acetyltransferase adrJ is the acetyltransferase that attaches the acetyl group to the C-3 hydroxyl group of andrastin F to yield andrastin C. Finally, the cytochrome P450 monooxygenase adrA catalyzes two sequential oxidation reactions of the C-23 methyl group, to generate the corresponding alcohol andrastin B, and aldehyde andrastin A. The polypeptide is Andrastin A biosynthesis cluster protein B (Penicillium rubens (strain ATCC 28089 / DSM 1075 / NRRL 1951 / Wisconsin 54-1255) (Penicillium chrysogenum)).